A 1658-amino-acid chain; its full sequence is MATIRGAIDRITDTTVRTTLQEEACRQIRTELKNVEHVNRYAIPPDAADALEHLGIGTNPFSVKLHTHGACKAIENQLLYVVGTLLPKERVTMLFLKKAKLNFMKRCPKFQDIFLNQHIEPRDVSRYCDFNVQSTSTSIPTHTAYISDTLHFMDRKDLVRLFINSPNLDTLYATIVLPVEAAYRQPSRYPDLYQINYDFDGFQYIPGGHGGGAYHHEFSHLEWLDVGHIHWRGPDNKDIQLTITAQMIESLGANHLFCFRRGNLRTPRVRTFGRDTQVLLPKIFRPVDKNFNRAIPLTLANKMLLYAKSINTVTFRDVVAKTRQLMKDKELETYTGADLLHMANYFFVVGALSGVNSYDQMLGLSAWEACTMALKNTVTNLWERITGKREFGKLLEALEWETLTYSRQVTQKYVGGTPARLPLPDITDQEEIFAQQEALDALTSGATKITTHHLMSAAARRSTEGPTMPTPAAQVPPTQNPKHTIDEVASRALVTKLQKNKRVYIQDDGPEYIMGHMAEVPAWYLEQDETTTRLRNRCAWFFGPPTHRYGHNDIEYHTTEYYPWVERIGNIFGKFNTCLAQTHDQGARIGYHADDEDCYDKDVTVATVNLTGNATFSLKTATGTRTWKLKPGDFIVLKPGAQGCTKHAISDCTTNRTSLTFRWQARPCPSQLRRVVNLGNVNNPKRKSKAQQWTPKTSNSDSPRLTQTPNSPTPKDVPVVSPKLADATAPTIRAVPENGAHTNMACVELTDLPETTTTHRPGKEPINDLTDSEPETESEQTENLVLNRFIQDLPTTSTHAWASETDSICSFQAEALGPSSVEALPWHEHLELINSLGFTGLERQYGPDNNLIWPITHYRTLPKSRTIEAPTDLVELLDTIDRHPTDVPYSKTRASAFGSDVKNLRIGALVKNQDKQWRASLALLCEENEHVLPTTVIHGAGGSGKSHLLQQWVSSTERGNVVVILPTIELLRDWLNKCPTTPKDSFKTFEKALVQNSAPVVIMDDYSKLPPGYIEAYVALKGQCKLLVLTGDPRQSHYHEENPEALISTLDPATDYFSKYCTYNINATHRNATTFANALGVYSERKLPVSVTCSSYQKSGWPTLVPSILKKTALNDMGQRSLTYAGCQGLTTPKVQIVLDNATPLCSEQVMYTALSRAVDQIHFFNTGPNHSDYWEKMNATPFLKTFIDHTREENLKEHQPAEPTVREHTPATHFPPANEALALEPWVEPLTDKHSRELHHKALGHSNCVQTDNPVVQLFPHQQAKDETLFWKTIDARIKITTPEENVRNFNMASDIGDILFLNYKEAMCLPADPIPFQQSLWDSCQAEVQQTYLSKPLAALANAAQRQDPDFDSNKIQLFLKSQWVKKVEKLGCLKIKPGQTIASFMQQTVMLYGTMARYMRRIRISLCPSHIMINCETNPTQISSWVRENWDFSGQSHENDFEAFDQSQDANMLQFELIKAKFHSIPEEIIAGYKHLKCHAHIFLGTIAIMRLSGEGPTFDANTECSIAYNHTRYFVPKGCAQLYAGDDSACAAPLSEKPSFQHISPELSLKSKAKIRSQTKGDYATFCGWLITPKGFIKNPTQLYASWLLAKHNKDLQDVARNYALDLRIAYQLKDELYELLSPEELDHHQLLVREMVKHKMGHLLNLPEGFKQT.

Positions 59–224 (NPFSVKLHTH…HHEFSHLEWL (166 aa)) constitute an Alphavirus-like MT domain. Positions 462–481 (STEGPTMPTPAAQVPPTQNP) are disordered. In terms of domain architecture, Fe2OG dioxygenase spans 574–665 (KFNTCLAQTH…RTSLTFRWQA (92 aa)). Positions 592, 594, and 647 each coordinate Fe cation. Residue Arg656 participates in 2-oxoglutarate binding. 2 disordered regions span residues 676-721 (VNLG…PVVS) and 754-776 (ETTT…EPET). Over residues 690–710 (AQQWTPKTSNSDSPRLTQTPN) the composition is skewed to polar residues. Residues 910–1065 (VKNQDKQWRA…YFSKYCTYNI (156 aa)) form the (+)RNA virus helicase ATP-binding domain. The 134-residue stretch at 1066-1199 (NATHRNATTF…HTREENLKEH (134 aa)) folds into the (+)RNA virus helicase C-terminal domain. Positions 1437–1544 (GQSHENDFEA…AAPLSEKPSF (108 aa)) constitute a RdRp catalytic domain.

Belongs to the potexvirus/carlavirus RNA replication protein family. Fe(2+) is required as a cofactor.

It carries out the reaction RNA(n) + a ribonucleoside 5'-triphosphate = RNA(n+1) + diphosphate. The enzyme catalyses ATP + H2O = ADP + phosphate + H(+). Its function is as follows. RNA replication. The central part of this protein possibly functions as an ATP-binding helicase. The sequence is that of RNA replication protein from Indian citrus ringspot virus (isolate Kinnow mandarin/India/K1/1996) (ICRSV).